The chain runs to 1168 residues: Transcription-repair-coupling factor (1168 aa).

The Helicase ATP-binding domain occupies 633–794; it reads DMQKSRPMDR…MLGVRDLSVI (162 aa). ATP is bound at residue 646–653; that stretch reads GDVGYGKT. The short motif at 747-750 is the DEEQ box element; the sequence is DEEQ. In terms of domain architecture, Helicase C-terminal spans 808-969; that stretch reads VLEQNMSFIK…GFKIAMRDLN (162 aa).

This sequence in the N-terminal section; belongs to the UvrB family. It in the C-terminal section; belongs to the helicase family. RecG subfamily.

The protein localises to the cytoplasm. Couples transcription and DNA repair by recognizing RNA polymerase (RNAP) stalled at DNA lesions. Mediates ATP-dependent release of RNAP and its truncated transcript from the DNA, and recruitment of nucleotide excision repair machinery to the damaged site. The protein is Transcription-repair-coupling factor of Staphylococcus aureus (strain USA300).